Reading from the N-terminus, the 130-residue chain is Holo-[acyl-carrier-protein] synthase (130 aa).

Mg(2+) is bound by residues aspartate 9 and glutamate 58.

Belongs to the P-Pant transferase superfamily. AcpS family. Mg(2+) serves as cofactor.

The protein localises to the cytoplasm. The catalysed reaction is apo-[ACP] + CoA = holo-[ACP] + adenosine 3',5'-bisphosphate + H(+). Transfers the 4'-phosphopantetheine moiety from coenzyme A to a Ser of acyl-carrier-protein. This is Holo-[acyl-carrier-protein] synthase from Mycobacterium sp. (strain JLS).